The sequence spans 75 residues: Small ribosomal subunit protein bS18 (75 aa).

This sequence belongs to the bacterial ribosomal protein bS18 family. Part of the 30S ribosomal subunit. Forms a tight heterodimer with protein bS6.

Its function is as follows. Binds as a heterodimer with protein bS6 to the central domain of the 16S rRNA, where it helps stabilize the platform of the 30S subunit. This chain is Small ribosomal subunit protein bS18, found in Shewanella loihica (strain ATCC BAA-1088 / PV-4).